Here is a 360-residue protein sequence, read N- to C-terminus: Protein Wnt-2 (360 aa).

Positions methionine 1–serine 26 are cleaved as a signal peptide. Intrachain disulfides connect cysteine 76-cysteine 87, cysteine 127-cysteine 135, cysteine 137-cysteine 157, cysteine 206-cysteine 220, cysteine 208-cysteine 215, cysteine 278-cysteine 309, cysteine 294-cysteine 304, cysteine 308-cysteine 348, cysteine 324-cysteine 339, cysteine 326-cysteine 336, and cysteine 331-cysteine 332. Serine 212 carries the O-palmitoleoyl serine; by PORCN lipid modification. The N-linked (GlcNAc...) asparagine glycan is linked to asparagine 295.

This sequence belongs to the Wnt family. In terms of processing, palmitoleoylation is required for efficient binding to frizzled receptors. Depalmitoleoylation leads to Wnt signaling pathway inhibition.

It is found in the secreted. The protein resides in the extracellular space. The protein localises to the extracellular matrix. Ligand for members of the frizzled family of seven transmembrane receptors. Probable developmental protein. May be a signaling molecule which affects the development of discrete regions of tissues. Is likely to signal over only few cell diameters. The protein is Protein Wnt-2 (WNT2) of Eulemur macaco macaco (Black lemur).